A 339-amino-acid polypeptide reads, in one-letter code: Serine/threonine-protein kinase pdik1l-A (339 aa).

One can recognise a Protein kinase domain in the interval 8–332 (YDLIREVGRG…LELKLIQIAF (325 aa)). ATP is bound by residues 14–22 (VGRGSYGVV) and K37. D164 functions as the Proton acceptor in the catalytic mechanism.

Belongs to the protein kinase superfamily. Ser/Thr protein kinase family.

The protein resides in the nucleus. The enzyme catalyses L-seryl-[protein] + ATP = O-phospho-L-seryl-[protein] + ADP + H(+). The catalysed reaction is L-threonyl-[protein] + ATP = O-phospho-L-threonyl-[protein] + ADP + H(+). The sequence is that of Serine/threonine-protein kinase pdik1l-A (pdik1-a) from Xenopus laevis (African clawed frog).